We begin with the raw amino-acid sequence, 282 residues long: 2-dehydro-3-deoxyphosphooctonate aldolase (282 aa).

This sequence belongs to the KdsA family.

It is found in the cytoplasm. The enzyme catalyses D-arabinose 5-phosphate + phosphoenolpyruvate + H2O = 3-deoxy-alpha-D-manno-2-octulosonate-8-phosphate + phosphate. It participates in carbohydrate biosynthesis; 3-deoxy-D-manno-octulosonate biosynthesis; 3-deoxy-D-manno-octulosonate from D-ribulose 5-phosphate: step 2/3. Its pathway is bacterial outer membrane biogenesis; lipopolysaccharide biosynthesis. The sequence is that of 2-dehydro-3-deoxyphosphooctonate aldolase from Bartonella bacilliformis (strain ATCC 35685 / KC583 / Herrer 020/F12,63).